Here is a 238-residue protein sequence, read N- to C-terminus: Glycerol uptake facilitator protein 4 (238 aa).

Transmembrane regions (helical) follow at residues 2–22 (IHQLLAEFMGTALMIIFGVGV) and 39–59 (IFAITTWGFGITIALFIFGNV). An NPA 1 motif is present at residues 62–64 (NPA). Transmembrane regions (helical) follow at residues 80–100 (FIPYSVAEVLGGVVGAVIVWI), 135–155 (FFVEFFDTFIFISGILAISEV), and 158–178 (PGIVPIGVGLLVWAIGMGLGG). Residues 185 to 187 (NLA) carry the NPA 2 motif. A helical membrane pass occupies residues 211–231 (YGIIVPGIAPFVGAACAALFM).

The protein belongs to the MIP/aquaporin (TC 1.A.8) family.

Its subcellular location is the cell membrane. Functionally, transporter that facilitates the transmembrane diffusion of water, dihydroxyacetone, glycerol, urea, H(2)O(2) and D/L-lactic acid. Is involved in the cellular racemization of lactate and lactate metabolism, but has likely a more general physiological role. The transported molecule is indeed lactic acid and not the lactate anion, in agreement with the assumption that, with very few exceptions, MIPs (major intrinsic proteins) only facilitate the transport of uncharged solutes. The sequence is that of Glycerol uptake facilitator protein 4 from Lactiplantibacillus plantarum (strain ATCC BAA-793 / NCIMB 8826 / WCFS1) (Lactobacillus plantarum).